The following is a 44-amino-acid chain: Opistoporin-2 (44 aa).

Expressed by the venom gland.

It is found in the secreted. Its subcellular location is the target cell membrane. At high concentrations, acts as a pore former in cellular membranes and causes the leakage of the cells. At submicromolar concentrations, degranulates granulocytes and has a weak hemolytic activity against human erythrocytes. Also strongly inhibits the production of superoxide anions. Has a strong antibacterial activity against Gram-negative bacteria but is less active against Gram-positive bacteria. Also has antifungal activity. The sequence is that of Opistoporin-2 from Opistophthalmus carinatus (African yellow leg scorpion).